The sequence spans 379 residues: ATP phosphoribosyltransferase regulatory subunit (379 aa).

This sequence belongs to the class-II aminoacyl-tRNA synthetase family. HisZ subfamily. Heteromultimer composed of HisG and HisZ subunits.

It is found in the cytoplasm. Its pathway is amino-acid biosynthesis; L-histidine biosynthesis; L-histidine from 5-phospho-alpha-D-ribose 1-diphosphate: step 1/9. In terms of biological role, required for the first step of histidine biosynthesis. May allow the feedback regulation of ATP phosphoribosyltransferase activity by histidine. This chain is ATP phosphoribosyltransferase regulatory subunit, found in Sinorhizobium fredii (strain NBRC 101917 / NGR234).